The primary structure comprises 67 residues: MAWKVSVDQDTCIGDAICASLCPDVFEMNDEGKAQPKVEIIEDEELYNCAKEAMESCPVSAITIEEA.

4Fe-4S ferredoxin-type domains follow at residues 3 to 31 (WKVS…MNDE) and 36 to 67 (PKVE…IEEA). Residues Cys-12, Asp-15, and Cys-18 each contribute to the [4Fe-4S] cluster site. An intrachain disulfide couples Cys-22 to Cys-49. A [4Fe-4S] cluster-binding site is contributed by Cys-57.

[4Fe-4S] cluster is required as a cofactor. The cofactor is [3Fe-4S] cluster.

Ferredoxins are iron-sulfur proteins that transfer electrons in a wide variety of metabolic reactions. This is Ferredoxin (fdxA) from Pyrococcus abyssi (strain GE5 / Orsay).